Consider the following 691-residue polypeptide: Protein-glutamine gamma-glutamyltransferase E (691 aa).

Residue tyrosine 110 is modified to Phosphotyrosine. A Phosphothreonine modification is found at threonine 111. Alanine 221, asparagine 224, asparagine 226, and aspartate 227 together coordinate Ca(2+). Cysteine 272 is an active-site residue. Ca(2+)-binding residues include aspartate 301, aspartate 303, asparagine 305, serine 307, and aspartate 324. Residues histidine 330 and aspartate 353 contribute to the active site. Residues asparagine 393, threonine 414, glutamate 442, and glutamate 447 each coordinate Ca(2+).

Belongs to the transglutaminase superfamily. Transglutaminase family. As to quaternary structure, consists of two polypeptide chains, which are synthesized as a precursor form of a single polypeptide. It depends on Ca(2+) as a cofactor. Activated by proteolytic processing. In vitro activation is commonly achieved by cleavage with dispase, a neutral bacterial protease. Physiological activation may be catalyzed by CTSL and, to a lesser extent, by CTSS.

Its subcellular location is the cytoplasm. It catalyses the reaction L-glutaminyl-[protein] + L-lysyl-[protein] = [protein]-L-lysyl-N(6)-5-L-glutamyl-[protein] + NH4(+). Its function is as follows. Catalyzes the calcium-dependent formation of isopeptide cross-links between glutamine and lysine residues in various proteins, as well as the conjugation of polyamines to proteins. Involved in the formation of the cornified envelope (CE), a specialized component consisting of covalent cross-links of proteins beneath the plasma membrane of terminally differentiated keratinocytes. Catalyzes small proline-rich proteins and LOR cross-linking to form small interchain oligomers, which are further cross-linked by TGM1 onto the growing CE scaffold. In hair follicles, involved in cross-linking structural proteins to hardening the inner root sheath. In Bos taurus (Bovine), this protein is Protein-glutamine gamma-glutamyltransferase E (TGM3).